Here is a 355-residue protein sequence, read N- to C-terminus: Guanine nucleotide-binding protein alpha-2 subunit (355 aa).

The segment at 1–20 (MCFGGRGKDDEAEASRSREL) is disordered. Positions 33–355 (KEVKLLLLGA…IQRNLKQLIL (323 aa)) constitute a G-alpha domain. Residues 36–49 (KLLLLGAGESGKST) form a G1 motif region. Residues Glu44, Ser45, Gly46, Lys47, Ser48, Thr49, Asp151, Leu176, Thr182, Gly204, Asn270, Lys271, Asp273, and Ala328 each contribute to the GTP site. Ser48 is a binding site for Mg(2+). Positions 174 to 182 (DLLRSRLRT) are G2 motif. Position 182 (Thr182) interacts with Mg(2+). Positions 197-206 (YRMFDVGGQR) are G3 motif. Residues 266 to 273 (ILFLNKID) are G4 motif. Residues 326–331 (TNATDT) are G5 motif.

The protein belongs to the G-alpha family. G(q) subfamily. As to quaternary structure, g proteins are composed of 3 units; alpha, beta and gamma. The alpha chain contains the guanine nucleotide binding site. Mg(2+) is required as a cofactor.

Functionally, guanine nucleotide-binding proteins (G proteins) are involved as modulators or transducers in various transmembrane signaling systems. The protein is Guanine nucleotide-binding protein alpha-2 subunit (gna-2) of Neurospora crassa (strain ATCC 24698 / 74-OR23-1A / CBS 708.71 / DSM 1257 / FGSC 987).